The following is a 506-amino-acid chain: MLLPRGFNRAVVTALGVVGTGTLVAAGPCDIYSSGGTPCVAAHSTTRALYSAYTGPLYQVKRGSDGATTNIAPLSAGGVANAAAQDSFCAGTTCLITIIYDQSGRGNHLTQAPPGGFKGPEANGYDNLASAIGAPVTLNGQKAYGVFISPGTGYRNNAASGTATGDAPEGMYAVLDGTHYNGGCCFDYGNAETSSTDTGNGHMEAIYFGDNTVWGSGSGSGPWIMADLENGLFSGSSTKNNAGDPSVSYRFLTAIVKGKPNQWAIRGANAASGSLSTYYNGARPNASGYNPMSKEGAIILGIGGDNSIGAQGTFYEGVMTSGYPSDATENSVQANIVAAKYAVAPLTSGPSLTVGSSISLRATTSCCTTRYLAHNGSTVNTQVVSSSSSTALKQQASWTVRAGLANSACFSFESKDTPGSFIRHYDFVLQLSANDGTKQFYEDATFCPQSGLNGQGSSIRSWNYPTRYFRHYNNVLYAASNGGVHTFDATGSFNDDVSWVVSTSFA.

Positions 1 to 26 are cleaved as a signal peptide; it reads MLLPRGFNRAVVTALGVVGTGTLVAA. The catalytic stretch occupies residues 27-343; the sequence is GPCDIYSSGG…ANIVAAKYAV (317 aa). 3 disulfides stabilise this stretch: Cys29/Cys39, Cys89/Cys94, and Cys184/Cys185. Asp227 serves as a coordination point for substrate. Glu229 functions as the Nucleophile in the catalytic mechanism. Asn230 provides a ligand contact to substrate. Asn285 carries N-linked (GlcNAc...) asparagine glycosylation. Gly304 is a substrate binding site. The Proton donor role is filled by Asp305. The segment at 344–506 is ABD; it reads APLTSGPSLT…VSWVVSTSFA (163 aa). Residue Asn375 is glycosylated (N-linked (GlcNAc...) asparagine). Cys409 and Cys447 are oxidised to a cystine. Substrate contacts are provided by His424, Phe427, Asp443, His471, Leu476, and Asp496.

Belongs to the glycosyl hydrolase 54 family.

It is found in the secreted. The catalysed reaction is Hydrolysis of terminal non-reducing alpha-L-arabinofuranoside residues in alpha-L-arabinosides.. It functions in the pathway glycan metabolism; L-arabinan degradation. Functionally, alpha-L-arabinofuranosidase involved in the degradation of arabinoxylan, a major component of plant hemicellulose. Able to hydrolyze 1,5-, 1,3- and 1,2-alpha-linkages not only in L-arabinofuranosyl oligosaccharides, but also in polysaccharides containing terminal non-reducing L-arabinofuranoses in side chains, like L-arabinan, arabinogalactan and arabinoxylan. This chain is Probable alpha-L-arabinofuranosidase B (abfB), found in Aspergillus terreus (strain NIH 2624 / FGSC A1156).